Consider the following 249-residue polypeptide: Ciliogenesis and planar polarity effector 2 (249 aa).

Positions 46-249 (PADVAAYKVF…VIAGLVGGAE (204 aa)) are small GTPase-like. GTP is bound by residues 58–65 (GKSGVGKT) and 171–174 (TKLD).

The protein belongs to the small GTPase superfamily. Rab family. In terms of assembly, interacts with fuz.

The protein resides in the cytoplasm. The protein localises to the cytoskeleton. Its subcellular location is the cilium basal body. Potential effector of the planar cell polarity signaling pathway. Plays a role in targeted membrane trafficking most probably at the level of vesicle fusion with membranes. Involved in cilium biogenesis by regulating the transport of cargo proteins to the basal body and to the apical tips of cilia. More generally involved in exocytosis in secretory cells. This chain is Ciliogenesis and planar polarity effector 2, found in Xenopus laevis (African clawed frog).